Reading from the N-terminus, the 157-residue chain is Small ribosomal subunit protein uS7 (157 aa).

It belongs to the universal ribosomal protein uS7 family. As to quaternary structure, part of the 30S ribosomal subunit. Contacts proteins S9 and S11.

One of the primary rRNA binding proteins, it binds directly to 16S rRNA where it nucleates assembly of the head domain of the 30S subunit. Is located at the subunit interface close to the decoding center, probably blocks exit of the E-site tRNA. The polypeptide is Small ribosomal subunit protein uS7 (Blochmanniella floridana).